Consider the following 1026-residue polypeptide: Vacuolar protein sorting-associated protein 18 homolog (1026 aa).

A coiled-coil region spans residues 858–896 (IVDFLKRNKQRLEKLERSMKEATEIASEIRDKQEKLKNR). The RING-type; degenerate zinc finger occupies 906 to 932 (CSHCARPISGRAFNVHSCRHFFHRECL).

Probable core component of at least two putative endosomal tethering complexes, the homotypic fusion and vacuole protein sorting (HOPS) complex and the class C core vacuole/endosome tethering (CORVET) complex. Their common core is composed of the class C Vps proteins vps-11, vps-16 and vps-18, which in HOPS further associates with vps-33.1, vps-39 and vps-41 and in CORVET with vps-8 and vps-33.2. In hermaphrodites, expressed in coelomocytes and gonadal sheath cells.

Its subcellular location is the cytoplasm. The protein resides in the late endosome membrane. It is found in the lysosome membrane. It localises to the early endosome. The protein localises to the cytoplasmic vesicle. Its subcellular location is the autophagosome. The protein resides in the clathrin-coated vesicle. Its function is as follows. Plays a role in vesicle-mediated protein trafficking to lysosomal compartments including the endocytic membrane transport and autophagic pathways. Believed to act as a core component of the putative HOPS and CORVET endosomal tethering complexes which are proposed to be involved in the rab-5-to-rab-7 endosome conversion probably implicating sand-1, and via binding SNAREs and SNARE complexes to mediate tethering and docking events during SNARE-mediated membrane fusion. The HOPS complex is proposed to be recruited to rab-7 on the late endosomal membrane and to regulate late endocytic, phagocytic and autophagic traffic towards lysosomes. Within the HOPS complex, contributes to the normal development of gut granules in intestinal cells of the embryo, and also promotes the trafficking of embryonic intestinal gut granules away from lysosomes. The CORVET complex is proposed to function as a rab-5 effector to mediate early endosome fusion probably in specific endosome subpopulations. Required for fusion of endosomes and autophagosomes with lysosomes. Plays a role in the degradation of apoptotic cells during programmed cell death. The sequence is that of Vacuolar protein sorting-associated protein 18 homolog from Caenorhabditis elegans.